A 130-amino-acid chain; its full sequence is Small ribosomal subunit protein uS9 (130 aa).

It belongs to the universal ribosomal protein uS9 family.

In Shewanella denitrificans (strain OS217 / ATCC BAA-1090 / DSM 15013), this protein is Small ribosomal subunit protein uS9.